The primary structure comprises 245 residues: tRNA (guanine-N(1)-)-methyltransferase (245 aa).

Residues Gly-111 and 131 to 136 each bind S-adenosyl-L-methionine; that span reads MGDYVL.

The protein belongs to the RNA methyltransferase TrmD family. Homodimer.

Its subcellular location is the cytoplasm. It catalyses the reaction guanosine(37) in tRNA + S-adenosyl-L-methionine = N(1)-methylguanosine(37) in tRNA + S-adenosyl-L-homocysteine + H(+). Specifically methylates guanosine-37 in various tRNAs. In Staphylococcus epidermidis (strain ATCC 12228 / FDA PCI 1200), this protein is tRNA (guanine-N(1)-)-methyltransferase.